The chain runs to 2224 residues: Protein sidekick (2224 aa).

Positions 1–47 are cleaved as a signal peptide; it reads MLKSAASSLRRRRPKTTITATLAIEMPSQPKLASLLAVLVLLCYCDS. Residues 48–2001 are Extracellular-facing; it reads CFFCYADANL…LQHKPFYRQT (1954 aa). The Ig-like C2-type 1 domain maps to 72-155; sequence PRFTTHPSSS…SIFSEKSDVV (84 aa). A disulfide bridge connects residues C95 and C138. N164, N250, N318, and N327 each carry an N-linked (GlcNAc...) asparagine glycan. 4 Ig-like C2-type domains span residues 261 to 355, 359 to 445, 455 to 541, and 546 to 636; these read PEII…ARLQ, PPLF…NSAS, PIME…AYLS, and TQII…ARLS. 2 disulfide bridges follow: C283/C336 and C382/C433. N463, N485, and N491 each carry an N-linked (GlcNAc...) asparagine glycan. Intrachain disulfides connect C476–C525 and C567–C620. Residues N628, N661, N707, N809, N870, N942, N1019, N1094, N1109, N1172, N1203, N1282, N1329, N1379, N1414, and N1420 are each glycosylated (N-linked (GlcNAc...) asparagine). Fibronectin type-III domains lie at 643 to 753, 758 to 855, 860 to 967, 971 to 1065, 1069 to 1164, 1169 to 1270, 1275 to 1372, 1376 to 1469, 1474 to 1570, 1575 to 1677, 1682 to 1785, 1789 to 1883, and 1885 to 1984; these read PPSN…LPQE, PPVG…TKEG, PPTN…TMDD, EVTG…VEPV, APTA…TIQA, PPFN…TREA, GPLD…TFED, VPSN…TNNR, APSV…TLPA, GVGG…VGEA, EPRA…TLPG, APLH…GPQD, and SPVA…TPSK. N-linked (GlcNAc...) asparagine glycans are attached at residues N1843 and N1876. The chain crosses the membrane as a helical span at residues 2002-2022; sequence WFMVSLAATSIVIIVMVIAVL. The Cytoplasmic portion of the chain corresponds to 2023-2224; sequence CVKSKSYKYK…APLPGFSSFV (202 aa). Disordered stretches follow at residues 2068 to 2157 and 2171 to 2195; these read TLNS…RSDP and LRQSWKKTKPVRNYSSYTDSEPEGS. S2071 carries the phosphoserine modification. A compositionally biased stretch (low complexity) spans 2073 to 2085; that stretch reads GTLRSGTLGTLGR. T2074 bears the Phosphothreonine mark. Basic and acidic residues-rich tracts occupy residues 2112-2122 and 2144-2157; these read HSDEESLKCYD and QHSESENESVRSDP. 2 positions are modified to phosphoserine: S2113 and S2117.

The protein belongs to the sidekick family.

It is found in the membrane. In terms of biological role, participates in homotypic or heterotypic interactions in the eye during pattern formation to prevent extra cells from joining the precluster and differentiating as photoreceptor cells. This Drosophila melanogaster (Fruit fly) protein is Protein sidekick.